The primary structure comprises 213 residues: Uridine kinase (213 aa).

15 to 22 (GASASGKS) is an ATP binding site.

It belongs to the uridine kinase family.

The protein localises to the cytoplasm. The enzyme catalyses uridine + ATP = UMP + ADP + H(+). It carries out the reaction cytidine + ATP = CMP + ADP + H(+). It functions in the pathway pyrimidine metabolism; CTP biosynthesis via salvage pathway; CTP from cytidine: step 1/3. Its pathway is pyrimidine metabolism; UMP biosynthesis via salvage pathway; UMP from uridine: step 1/1. The sequence is that of Uridine kinase from Salmonella agona (strain SL483).